A 159-amino-acid chain; its full sequence is Ethylene-responsive transcription factor ERF069 (159 aa).

2 disordered regions span residues 1-36 (MKRIVRISFTDMEATDSSSSEDESPPSSRRRGKKLV) and 128-159 (DAPTNFGRPDVDSAVVKKQDSDASGGASEEVV). The segment at residues 74–134 (KFRGVRQRPW…IGPDAPTNFG (61 aa)) is a DNA-binding region (AP2/ERF). Basic and acidic residues predominate over residues 136 to 148 (PDVDSAVVKKQDS).

Belongs to the AP2/ERF transcription factor family. ERF subfamily.

The protein resides in the nucleus. Functionally, probably acts as a transcriptional activator. Binds to the GCC-box pathogenesis-related promoter element. May be involved in the regulation of gene expression by stress factors and by components of stress signal transduction pathways. In Arabidopsis thaliana (Mouse-ear cress), this protein is Ethylene-responsive transcription factor ERF069 (ERF069).